A 680-amino-acid chain; its full sequence is MIDRYKHQQLRIGLVSPQQISAWATKIIPNGEIVGEVTKPYTFHYKTNKPEKDGLFCERIFGPIKSGICACGNYRVIGDEKEDPKFCEQCGVEFVDSRIRRYQMGYIKLTCPVTHVWYLKRLPSYIANLLDKPLKELEGLVYCDFSFARPITKKPTFLRLRGSFEYEIQSWKYSIPLFFTTQGFDIFRNREISTGAGAIREQLADLDLRIIIENSLVEWKQLGEEGPTGNEWEDRKIVRRKDFLVRRMELAKHFIRTNIEPEWMVLCLLPVLPPELRPIIQIEGGKLMSSDINELYRRVIYRNNTLTDLLTTSRSTPGELVMCQEKLVQEAVDTLLDNGIRGQPMRDGHNKVYKSFSDVIEGKEGRFRETLLGKRVDYSGRSVIVVGPSLSLHRCGLPREIAIELFQTFVIRGLIRQHLASNIGVAKSQIREKKPIVWEILQEVMQGHPVLLNRAPTLHRLGIQSFQPILVEGRTICLHPLVCKGFNADFDGDQMAVHVPLSLEAQAEARLLMFSHMNLLSPAIGDPISVPTQDMLIGLYVLTSGTRRGICANRYNPCNRKNYQNERIYETNYKYTKEPFFCNSYDAIGAYRQKRIDLDSPLWLRWQLDQRVIASREVPIEVHYESFGNYHEIYAHYLIVRSVKKETFCIYIRTTVGHISFYREIEEAIQGFSQACSYDT.

Residues cysteine 69, cysteine 71, cysteine 87, and cysteine 90 each contribute to the Zn(2+) site. Mg(2+) is bound by residues aspartate 489, aspartate 491, and aspartate 493.

The protein belongs to the RNA polymerase beta' chain family. RpoC1 subfamily. In terms of assembly, in plastids the minimal PEP RNA polymerase catalytic core is composed of four subunits: alpha, beta, beta', and beta''. When a (nuclear-encoded) sigma factor is associated with the core the holoenzyme is formed, which can initiate transcription. Mg(2+) serves as cofactor. It depends on Zn(2+) as a cofactor.

The protein resides in the plastid. Its subcellular location is the chloroplast. It carries out the reaction RNA(n) + a ribonucleoside 5'-triphosphate = RNA(n+1) + diphosphate. Functionally, DNA-dependent RNA polymerase catalyzes the transcription of DNA into RNA using the four ribonucleoside triphosphates as substrates. The protein is DNA-directed RNA polymerase subunit beta' of Capsella bursa-pastoris (Shepherd's purse).